Consider the following 457-residue polypeptide: UDP-N-acetylmuramate--L-alanine ligase (457 aa).

Gly109–Thr115 serves as a coordination point for ATP.

Belongs to the MurCDEF family.

The protein localises to the cytoplasm. The catalysed reaction is UDP-N-acetyl-alpha-D-muramate + L-alanine + ATP = UDP-N-acetyl-alpha-D-muramoyl-L-alanine + ADP + phosphate + H(+). Its pathway is cell wall biogenesis; peptidoglycan biosynthesis. Cell wall formation. This is UDP-N-acetylmuramate--L-alanine ligase from Thermotoga petrophila (strain ATCC BAA-488 / DSM 13995 / JCM 10881 / RKU-1).